A 468-amino-acid chain; its full sequence is Tapasin-related protein (468 aa).

A signal peptide spans 1-18; the sequence is MGTQEGWCLLLCLALSGA. Residues 19–405 are Lumenal-facing; it reads AETKPHPAEG…STQVVPPERR (387 aa). The 117-residue stretch at 181–297 folds into the Ig-like V-type domain; sequence PQGTVRTAVE…SLYRAQQIIQ (117 aa). 2 cysteine pairs are disulfide-bonded: Cys212–Cys283 and Cys321–Cys382. The Ig-like C1-type domain maps to 304–394; it reads PKVRLSLANE…THISLEEPLG (91 aa). A helical membrane pass occupies residues 406 to 426; it reads TALGVIFASSLFLLALMFLGL. Residues 427 to 468 are Cytoplasmic-facing; sequence QRRQAPTGLGLLQAERWETTSCADTQSSHLHEDRTARVSQPS. Residues 449–468 form a disordered region; sequence ADTQSSHLHEDRTARVSQPS.

As to quaternary structure, interacts with peptide-free HLA-A*02-B2M complexes or those loaded with low affinity peptides, likely facilitating peptide exchange onto higher affinity peptides. Interacts with MR1 in a ligand-independent way; this interaction may stabilize MR1 pool and facilitate ligand loading and dissociation.

Its subcellular location is the cell membrane. It is found in the endoplasmic reticulum membrane. The protein resides in the microsome membrane. It localises to the golgi apparatus membrane. Its function is as follows. Component of the antigen processing and presentation pathway, which binds to MHC class I coupled with beta2-microglobulin/B2M. Association between TAPBPR and MHC class I occurs in the absence of a functional peptide-loading complex (PLC). This chain is Tapasin-related protein (TAPBPL), found in Homo sapiens (Human).